The following is a 715-amino-acid chain: Eosinophil peroxidase (715 aa).

The signal sequence occupies residues 1–17 (MHLLPALAGVLATLVLA). Residues 18–139 (QPCEGTDPAS…SGCALRDQAE (122 aa)) constitute a propeptide that is removed on maturation. N-linked (GlcNAc...) asparagine glycosylation is found at asparagine 52 and asparagine 113. Cysteine 141 and cysteine 152 are oxidised to a cystine. Position 232 (aspartate 232) interacts with heme b. Histidine 233 acts as the Proton acceptor in catalysis. Residue aspartate 234 coordinates Ca(2+). Intrachain disulfides connect cysteine 253–cysteine 263 and cysteine 257–cysteine 281. 4 residues coordinate Ca(2+): threonine 306, phenylalanine 308, aspartate 310, and serine 312. 2 N-linked (GlcNAc...) asparagine glycosylation sites follow: asparagine 327 and asparagine 363. Cysteine 359 and cysteine 370 are oxidised to a cystine. Residues glutamate 380 and histidine 474 each coordinate heme b. The residue at position 488 (tyrosine 488) is a 3'-nitrotyrosine. 2 disulfide bridges follow: cysteine 578/cysteine 635 and cysteine 676/cysteine 701. Residues asparagine 700 and asparagine 708 are each glycosylated (N-linked (GlcNAc...) asparagine).

Belongs to the peroxidase family. XPO subfamily. As to quaternary structure, tetramer of two light chains and two heavy chains. Ca(2+) serves as cofactor. The cofactor is heme b.

The protein resides in the cytoplasmic granule. The enzyme catalyses 2 a phenolic donor + H2O2 = 2 a phenolic radical donor + 2 H2O. In terms of biological role, mediates tyrosine nitration of secondary granule proteins in mature resting eosinophils. Shows significant inhibitory activity towards Mycobacterium tuberculosis H37Rv by inducing bacterial fragmentation and lysis. The polypeptide is Eosinophil peroxidase (EPX) (Homo sapiens (Human)).